The sequence spans 704 residues: MNPIVKQFKYGQHTVTLETGAIARQATAAVMASMDDTTVFVSVVAKKDVKEGQDFFPLTVDYQERTYAAGKIPGGFFKREGRPSEGETLIARLIDRPIRPLFPEGFLNEIQIIATVVSVNPQISPDLVAMIGASAALSLSGVPFNGPIGAARVGFINDQFVLNPTMAEQKQSRLDLVVAGTDKAVLMVESEADILTEEQMLAAVVFGHQQQQVVVEAIKEFVAEAGKPRWDWVAPEPDSALISKVKAIAENRLGDAYRITEKQVRYEQIDAIKADVIAQITAEDEEVSEGKIVDIFTALESQIVRGRIIAGEPRIDGRTVDTVRALDICTGVLPRTHGSAIFTRGETQSLAVVTLGTERDAQILDELTGERQDTFLFHYNFPPYSVGETGRVGSPKRREIGHGRLAKRGVAAVMPSISEFPYVVRVVSEITESNGSSSMASVCGASLALMDAGVPVKSAVAGIAMGLVKEDDKFVVLSDILGDEDHLGDMDFKVAGTRTGVTALQMDIKIEGITPEIMQIALNQAKSARMHILGVMEQAISAPRAEISEFAPRIYTMKIDPKKIKDVIGKGGATIRALTEETGTSIDIDDDGTVKIAAVDGNAVKTVMARIEDITAEVEAGAVYTGKVTRLADFGAFVAIVGNKEGLVHISQIAEERVEKVSDYLQVGQEVQVKVVEIDRQGRIRLTMRDLGSKEESQELSVEQ.

Mg(2+) is bound by residues D485 and D491. Positions P552–I611 constitute a KH domain. The 69-residue stretch at G621 to R689 folds into the S1 motif domain.

It belongs to the polyribonucleotide nucleotidyltransferase family. Component of the RNA degradosome, which is a multiprotein complex involved in RNA processing and mRNA degradation. The cofactor is Mg(2+).

The protein localises to the cytoplasm. The catalysed reaction is RNA(n+1) + phosphate = RNA(n) + a ribonucleoside 5'-diphosphate. Involved in mRNA degradation. Catalyzes the phosphorolysis of single-stranded polyribonucleotides processively in the 3'- to 5'-direction. This Mannheimia succiniciproducens (strain KCTC 0769BP / MBEL55E) protein is Polyribonucleotide nucleotidyltransferase.